Consider the following 918-residue polypeptide: Rap guanine nucleotide exchange factor 3 (918 aa).

The residue at position 79 (S79) is a Phosphoserine. The DEP domain occupies 110–186; sequence ATYPTLIRDR…RDAQFYRFPG (77 aa). The interval 218–242 is interaction with PDE3B; sequence TVALRKPPGQRTDEELDLIFEELLH. 3',5'-cyclic AMP contacts are provided by residues 311 to 314 and 321 to 322; these read GQLA and RA. Residues 369–388 are disordered; the sequence is TSQGAGPSRPPTPGRNRYTV. Positions 384 to 521 constitute an N-terminal Ras-GEF domain; sequence NRYTVMSGTP…EQYPERRRHH (138 aa). Positions 398 to 422 are interaction with PDE3B; sequence ELLLEAMRPDSSAHDPTETFLSDFL. Phosphoserine is present on residues S531 and S859. A Ras-GEF domain is found at 665–884; that stretch reads SAKDLAGQLT…SRISTCSEQS (220 aa).

In terms of assembly, interacts with PDE3B and PIK3R6; form a signaling complex that regulates phosphatidylinositol 3-kinase gamma in angiogenesis.

The protein resides in the cytoplasm. It is found in the membrane. Its function is as follows. Guanine nucleotide exchange factor (GEF) for RAP1A and RAP2A small GTPases that is activated by binding cAMP. Through simultaneous binding of PDE3B to RAPGEF3 and PIK3R6 is assembled in a signaling complex in which it activates the PI3K gamma complex and which is involved in angiogenesis. Plays a role in the modulation of the cAMP-induced dynamic control of endothelial barrier function through a pathway that is independent on Rho-mediated signaling. Required for the actin rearrangement at cell-cell junctions, such as stress fibers and junctional actin. The polypeptide is Rap guanine nucleotide exchange factor 3 (Rapgef3) (Mus musculus (Mouse)).